Reading from the N-terminus, the 101-residue chain is Interleukin-8 (101 aa).

Residues 1 to 22 (MTSKLVVALLAAFMLSAALCEA) form the signal peptide. Arginine 27 is modified (citrulline). Disulfide bonds link cysteine 34–cysteine 61 and cysteine 36–cysteine 77.

The protein belongs to the intercrine alpha (chemokine CxC) family. As to quaternary structure, homodimer. Interacts with TNFAIP6 (via Link domain); this interaction interferes with chemokine binding to glycosaminoglycans. Citrullination at Arg-27 prevents proteolysis, and dampens tissue inflammation, it also enhances leukocytosis, possibly through impaired chemokine clearance from the blood circulation.

The protein resides in the secreted. Its function is as follows. Chemotactic factor that mediates inflammatory response by attracting neutrophils, basophils, and T-cells to clear pathogens and protect the host from infection. Also plays an important role in neutrophil activation. Released in response to an inflammatory stimulus, exerts its effect by binding to the G-protein-coupled receptors CXCR1 and CXCR2, primarily found in neutrophils, monocytes and endothelial cells. G-protein heterotrimer (alpha, beta, gamma subunits) constitutively binds to CXCR1/CXCR2 receptor and activation by IL8 leads to beta and gamma subunits release from Galpha (GNAI2 in neutrophils) and activation of several downstream signaling pathways including PI3K and MAPK pathways. This chain is Interleukin-8 (CXCL8), found in Felis catus (Cat).